Reading from the N-terminus, the 548-residue chain is MNPSTTQARVVVDELIRGGVRDVVLCPGSRNAPLAFALQDADRSGRIRLHVRIDERTAGFLAIGLAVGAGAPACVAMTSGTAVANLGPAVVETNYARVPLIVLSANRPYELLGTGANQTMEQLGYFGTQVRATISLGLAEDAHERLDSLNASWRSATCRMLAAAMGSRTANAGPVHFDIPLREPLVPDPDPHGAVTPPGRPEGRPWTYTPPVTFDQPLEIDLSADTVVIAGHGAGVHPNLVQLPTIAEPTAPAAPSGGNPLHPLALPLLRPRQVIMLGRPTLHRPVSALLADPEVPVFALTTGPRWPDVSGNSQATGTRAIVTGTPNPSWLDRCAQMNRHAVAAVREQLAAHPLTTGLHVAAAVAGALRPGDQLVLGASNPVRDAALVGLDTAGLRVRSNRGVAGIDGTVSTAIGAALGYERDHHGRTVALIGDLTFVHDSSGLLIGPTEPTPRQLTIVVSNDNGGGIFELLEQGDPRFSDVSSRIFGTPHDVDVGALCRAYHVENRQIEVDQLPAALDEPGSGLRVLEVKADRSSLRQLHAAIKAAL.

The protein belongs to the TPP enzyme family. MenD subfamily. As to quaternary structure, homodimer. The cofactor is Mg(2+). Mn(2+) serves as cofactor. Thiamine diphosphate is required as a cofactor.

It catalyses the reaction isochorismate + 2-oxoglutarate + H(+) = 5-enolpyruvoyl-6-hydroxy-2-succinyl-cyclohex-3-ene-1-carboxylate + CO2. Its pathway is quinol/quinone metabolism; 1,4-dihydroxy-2-naphthoate biosynthesis; 1,4-dihydroxy-2-naphthoate from chorismate: step 2/7. It functions in the pathway quinol/quinone metabolism; menaquinone biosynthesis. In terms of biological role, catalyzes the thiamine diphosphate-dependent decarboxylation of 2-oxoglutarate and the subsequent addition of the resulting succinic semialdehyde-thiamine pyrophosphate anion to isochorismate to yield 2-succinyl-5-enolpyruvyl-6-hydroxy-3-cyclohexene-1-carboxylate (SEPHCHC). This Mycobacterium ulcerans (strain Agy99) protein is 2-succinyl-5-enolpyruvyl-6-hydroxy-3-cyclohexene-1-carboxylate synthase.